The primary structure comprises 351 residues: Signal recognition particle receptor FtsY (351 aa).

Residues 156–163 (GINGTGKT), 238–242 (DTAGR), and 302–305 (TKLD) contribute to the GTP site.

The protein belongs to the GTP-binding SRP family. FtsY subfamily. As to quaternary structure, part of the signal recognition particle protein translocation system, which is composed of SRP and FtsY. SRP is a ribonucleoprotein composed of Ffh and a 4.5S RNA molecule.

It localises to the cell membrane. The protein resides in the cytoplasm. The enzyme catalyses GTP + H2O = GDP + phosphate + H(+). In terms of biological role, involved in targeting and insertion of nascent membrane proteins into the cytoplasmic membrane. Acts as a receptor for the complex formed by the signal recognition particle (SRP) and the ribosome-nascent chain (RNC). Interaction with SRP-RNC leads to the transfer of the RNC complex to the Sec translocase for insertion into the membrane, the hydrolysis of GTP by both Ffh and FtsY, and the dissociation of the SRP-FtsY complex into the individual components. This Buchnera aphidicola subsp. Schizaphis graminum (strain Sg) protein is Signal recognition particle receptor FtsY.